Reading from the N-terminus, the 125-residue chain is MSLPKDLLYTEEHEWVKADDGSYIIGITDFAQDQLGDIVFVELPEVGDTVTKGDSIGSIESVKTVSDFYAPVTGKVVAVNETLEDEPELINSNPYDTGWILKLTEVEEADVTALLSSDDYEKGLD.

Positions serine 22–threonine 104 constitute a Lipoyl-binding domain. Residue lysine 63 is modified to N6-lipoyllysine.

Belongs to the GcvH family. As to quaternary structure, the glycine cleavage system is composed of four proteins: P, T, L and H. The cofactor is (R)-lipoate.

In terms of biological role, the glycine cleavage system catalyzes the degradation of glycine. The H protein shuttles the methylamine group of glycine from the P protein to the T protein. Is also involved in protein lipoylation via its role as an octanoyl/lipoyl carrier protein intermediate. The sequence is that of Glycine cleavage system H protein from Listeria welshimeri serovar 6b (strain ATCC 35897 / DSM 20650 / CCUG 15529 / CIP 8149 / NCTC 11857 / SLCC 5334 / V8).